The sequence spans 169 residues: Neurotensin/neuromedin N (169 aa).

Positions 1–22 (MRGMNLQLVCLTLLAFSSWSLC) are cleaved as a signal peptide.

The protein belongs to the neurotensin family. As to quaternary structure, interacts with NTSR1. Interacts with SORT1. Interacts with SORL1. In terms of processing, neurotensin is cleaved and degraded by Angiotensin-converting enzyme (ACE) and neprilysin (MME).

Its subcellular location is the secreted. The protein resides in the cytoplasmic vesicle. The protein localises to the secretory vesicle. Functionally, neurotensin may play an endocrine or paracrine role in the regulation of fat metabolism. It causes contraction of smooth muscle. The polypeptide is Neurotensin/neuromedin N (Nts) (Mus musculus (Mouse)).